The sequence spans 275 residues: Exosome complex component RRP40 (275 aa).

N-acetylalanine is present on Ala2. Lys151 participates in a covalent cross-link: Glycyl lysine isopeptide (Lys-Gly) (interchain with G-Cter in SUMO2).

This sequence belongs to the RRP40 family. In terms of assembly, component of the RNA exosome core complex (Exo-9), composed of EXOSC1, EXOSC2, EXOSC3, EXOSC4, EXOSC5, EXOSC6, EXOSC7, EXOSC8 and EXOSC9; within the complex interacts with EXOSC5 and EXOSC9. The catalytically inactive RNA exosome core complex (Exo-9) associates with the catalytic subunit EXOSC10/RRP6. Exo-9 may associate with DIS3 to form the nucleolar exosome complex, or DIS3L to form the cytoplasmic exosome complex. Exo-9 is formed by a hexameric base ring consisting of the heterodimers EXOSC4-EXOSC9, EXOSC5-EXOSC8 and EXOSC6-EXOSC7, and a cap ring consisting of EXOSC1, EXOSC2 and EXOSC3. The RNA exosome complex associates with cofactors C1D/RRP47, MPHOSPH6/MPP6 and MTREX/MTR4. Interacts with MPHOSPH6/MPP6; the interaction is direct. Interacts with GTPBP1. Interacts with ZC3HAV1. Interacts with DDX17 only in the presence of ZC3HAV1 in an RNA-independent manner. Interacts with DHX36; this interaction occurs in a RNase-insensitive manner. Interacts with HBS1L isoform 2.

It is found in the cytoplasm. Its subcellular location is the nucleus. It localises to the nucleolus. Non-catalytic component of the RNA exosome complex which has 3'-&gt;5' exoribonuclease activity and participates in a multitude of cellular RNA processing and degradation events. In the nucleus, the RNA exosome complex is involved in proper maturation of stable RNA species such as rRNA, snRNA and snoRNA, in the elimination of RNA processing by-products and non-coding 'pervasive' transcripts, such as antisense RNA species and promoter-upstream transcripts (PROMPTs), and of mRNAs with processing defects, thereby limiting or excluding their export to the cytoplasm. The RNA exosome may be involved in Ig class switch recombination (CSR) and/or Ig variable region somatic hypermutation (SHM) by targeting AICDA deamination activity to transcribed dsDNA substrates. In the cytoplasm, the RNA exosome complex is involved in general mRNA turnover and specifically degrades inherently unstable mRNAs containing AU-rich elements (AREs) within their 3' untranslated regions, and in RNA surveillance pathways, preventing translation of aberrant mRNAs. It seems to be involved in degradation of histone mRNA. The catalytic inactive RNA exosome core complex of 9 subunits (Exo-9) is proposed to play a pivotal role in the binding and presentation of RNA for ribonucleolysis, and to serve as a scaffold for the association with catalytic subunits and accessory proteins or complexes. EXOSC3 as peripheral part of the Exo-9 complex stabilizes the hexameric ring of RNase PH-domain subunits through contacts with EXOSC9 and EXOSC5. This Bos taurus (Bovine) protein is Exosome complex component RRP40 (EXOSC3).